A 414-amino-acid chain; its full sequence is Gamma-glutamyl phosphate reductase (414 aa).

The protein belongs to the gamma-glutamyl phosphate reductase family.

The protein resides in the cytoplasm. The enzyme catalyses L-glutamate 5-semialdehyde + phosphate + NADP(+) = L-glutamyl 5-phosphate + NADPH + H(+). It participates in amino-acid biosynthesis; L-proline biosynthesis; L-glutamate 5-semialdehyde from L-glutamate: step 2/2. Catalyzes the NADPH-dependent reduction of L-glutamate 5-phosphate into L-glutamate 5-semialdehyde and phosphate. The product spontaneously undergoes cyclization to form 1-pyrroline-5-carboxylate. The sequence is that of Gamma-glutamyl phosphate reductase from Geobacillus kaustophilus (strain HTA426).